The following is a 334-amino-acid chain: Anthranilate phosphoribosyltransferase (334 aa).

Residues G79, 82 to 83 (GD), S87, 89 to 92 (NIST), 107 to 115 (KAGNRSISS), and S119 contribute to the 5-phospho-alpha-D-ribose 1-diphosphate site. G79 lines the anthranilate pocket. S91 serves as a coordination point for Mg(2+). N110 provides a ligand contact to anthranilate. Position 165 (R165) interacts with anthranilate. 2 residues coordinate Mg(2+): D224 and E225.

Belongs to the anthranilate phosphoribosyltransferase family. As to quaternary structure, homodimer. It depends on Mg(2+) as a cofactor.

The enzyme catalyses N-(5-phospho-beta-D-ribosyl)anthranilate + diphosphate = 5-phospho-alpha-D-ribose 1-diphosphate + anthranilate. Its pathway is amino-acid biosynthesis; L-tryptophan biosynthesis; L-tryptophan from chorismate: step 2/5. In terms of biological role, catalyzes the transfer of the phosphoribosyl group of 5-phosphorylribose-1-pyrophosphate (PRPP) to anthranilate to yield N-(5'-phosphoribosyl)-anthranilate (PRA). The sequence is that of Anthranilate phosphoribosyltransferase from Streptococcus thermophilus (strain ATCC BAA-250 / LMG 18311).